The following is a 443-amino-acid chain: DNA primase DnaG (443 aa).

A Toprim domain is found at 169-243; the sequence is DSIIIVEGRA…DIDYVSRAPY (75 aa). Mg(2+) contacts are provided by Glu-175, Asp-217, and Asp-219.

It belongs to the archaeal DnaG primase family. As to quaternary structure, forms a ternary complex with MCM helicase and DNA. Mg(2+) serves as cofactor.

It carries out the reaction ssDNA + n NTP = ssDNA/pppN(pN)n-1 hybrid + (n-1) diphosphate.. RNA polymerase that catalyzes the synthesis of short RNA molecules used as primers for DNA polymerase during DNA replication. This chain is DNA primase DnaG, found in Methanococcus vannielii (strain ATCC 35089 / DSM 1224 / JCM 13029 / OCM 148 / SB).